A 3707-amino-acid polypeptide reads, in one-letter code: Basement membrane-specific heparan sulfate proteoglycan core protein (3707 aa).

The signal sequence occupies residues 1–21 (MGQRAVGSLLLGLLLHARLLA). O-linked (Xyl...) (heparan sulfate) serine glycans are attached at residues serine 65, serine 71, and serine 76. The region spanning 80–191 (QMVYFRALVN…WGFKFRRLGT (112 aa)) is the SEA domain. Asparagine 89 carries N-linked (GlcNAc...) asparagine glycosylation. LDL-receptor class A domains follow at residues 195–234 (FPRVCTETEFACHSYNECVALEYRCDRRPDCRDMSDELNC), 281–319 (GPSACGPQEASCHSGHCIPRDYLCDGQEDCRDGSDELGC), 320–359 (ASPPPCEPNEFACENGHCALKLWRCDGDFDCEDRTDEANC), and 360–403 (SVKQ…EFGC). 13 cysteine pairs are disulfide-bonded: cysteine 199–cysteine 212, cysteine 206–cysteine 225, cysteine 219–cysteine 234, cysteine 285–cysteine 297, cysteine 292–cysteine 310, cysteine 304–cysteine 319, cysteine 325–cysteine 337, cysteine 332–cysteine 350, cysteine 344–cysteine 359, cysteine 368–cysteine 381, cysteine 375–cysteine 394, cysteine 388–cysteine 403, and cysteine 428–cysteine 479. A glycan (N-linked (GlcNAc...) asparagine) is linked at asparagine 358. The Ig-like C2-type 1 domain maps to 404-504 (MPPQVVTPPQ…VLELVPQRGP (101 aa)). In terms of domain architecture, Laminin EGF-like 1; first part spans 521–530 (CFCFGVTNVC). One can recognise a Laminin IV type A 1 domain in the interval 538-730 (DQIRLSFDQP…IHGRAHSVEE (193 aa)). Asparagine 554 carries an N-linked (GlcNAc...) asparagine glycan. A Laminin EGF-like 1; second part domain is found at 731 to 763 (CRCPIGYSGLSCESCDAHFTRVPGGPYLGTCSG). 11 disulfide bridges follow: cysteine 764-cysteine 773, cysteine 766-cysteine 780, cysteine 783-cysteine 792, cysteine 795-cysteine 811, cysteine 814-cysteine 829, cysteine 816-cysteine 839, cysteine 842-cysteine 851, cysteine 854-cysteine 869, cysteine 879-cysteine 892, cysteine 894-cysteine 903, and cysteine 906-cysteine 921. Laminin EGF-like domains lie at 764–813 (CNCN…ACRP) and 814–871 (CPCP…KCRP). A Laminin EGF-like 4; truncated domain is found at 879 to 923 (CDERGSLGTSGETCRCKNNVVGRLCNECSDGSFHLSKQNPDGCLK). The Laminin EGF-like 5; first part domain occupies 924–933 (CFCMGVSRQC). A Laminin IV type A 2 domain is found at 941–1125 (AQVLGASEQP…GQDSAREVEQ (185 aa)). In terms of domain architecture, Laminin EGF-like 5; second part spans 1126-1158 (CTCPPGYRGPSCQDCDTGYTRVPSGLYLGTCER). Disulfide bonds link cysteine 1159/cysteine 1168, cysteine 1161/cysteine 1175, cysteine 1178/cysteine 1187, cysteine 1190/cysteine 1206, cysteine 1209/cysteine 1224, cysteine 1211/cysteine 1234, cysteine 1237/cysteine 1246, cysteine 1249/cysteine 1263, cysteine 1275/cysteine 1287, cysteine 1277/cysteine 1293, cysteine 1295/cysteine 1304, and cysteine 1307/cysteine 1322. 3 consecutive Laminin EGF-like domains span residues 1159–1208 (CNCH…DCQP), 1209–1265 (CPCY…PCHR), and 1275–1324 (CGCD…GCLP). Positions 1325 to 1334 (CFCMGVTQQC) constitute a Laminin EGF-like 9; first part domain. In terms of domain architecture, Laminin IV type A 3 spans 1344–1529 (ISTHFAPGDF…SGPRALEVEE (186 aa)). The Laminin EGF-like 9; second part domain occupies 1530-1562 (CRCPPGYVGLSCQDCAPGYTRTGSGLYLGQCEL). Cystine bridges form between cysteine 1563/cysteine 1572, cysteine 1565/cysteine 1579, cysteine 1582/cysteine 1591, cysteine 1594/cysteine 1610, cysteine 1613/cysteine 1628, cysteine 1615/cysteine 1638, cysteine 1641/cysteine 1650, and cysteine 1653/cysteine 1668. 2 Laminin EGF-like domains span residues 1563–1612 (CECN…DCQP) and 1613–1670 (CACP…RCQP). Ig-like C2-type domains lie at 1677-1771 (EVQI…KPIM), 1772-1865 (VTVE…STAP), 1866-1954 (VASI…GGSG), 1955-2049 (PRVQ…PAPA), 2050-2148 (SPAP…PGVV), 2149-2244 (PPIR…PAPG), 2245-2343 (LAQP…RLRS), 2344-2436 (PVIS…PPTV), 2437-2532 (SVLP…APGT), 2533-2619 (PQVQ…VESP), 2620-2720 (PYAT…GGST), 2721-2809 (PTVQ…ALPS), 2810-2895 (VLIN…LVQA), and 2896-2980 (LPQI…LQVP). Positions 1713 to 1733 (DGRPLPSSAQQRHQGSELHFP) are disordered. 3 disulfides stabilise this stretch: cysteine 1792–cysteine 1839, cysteine 1886–cysteine 1932, and cysteine 1976–cysteine 2021. The interval 2039 to 2061 (SPSTNSPPAPASPAPIRIESSSS) is disordered. Over residues 2052-2061 (APIRIESSSS) the composition is skewed to low complexity. Disulfide bonds link cysteine 2073–cysteine 2118, cysteine 2170–cysteine 2215, and cysteine 2268–cysteine 2313. 3 N-linked (GlcNAc...) asparagine glycosylation sites follow: asparagine 2336, asparagine 2394, and asparagine 2427. A disulfide bridge connects residues cysteine 2365 and cysteine 2413. 2 disulfides stabilise this stretch: cysteine 2456–cysteine 2506 and cysteine 2554–cysteine 2599. The N-linked (GlcNAc...) asparagine glycan is linked to asparagine 2600. A disulfide bond links cysteine 2641 and cysteine 2686. Intrachain disulfides connect cysteine 2831–cysteine 2876 and cysteine 2917–cysteine 2962. Residues 2984–3162 (IPYFTQTPYS…VNLTTHGISH (179 aa)) form the Laminin G-like 1 domain. 2 N-linked (GlcNAc...) asparagine glycosylation sites follow: asparagine 3098 and asparagine 3154. Intrachain disulfides connect cysteine 3137-cysteine 3163, cysteine 3166-cysteine 3177, cysteine 3171-cysteine 3187, cysteine 3204-cysteine 3216, and cysteine 3229-cysteine 3238. The region spanning 3163–3241 (CPTCQDRPCQ…GRSGVRCEEG (79 aa)) is the EGF-like domain. Positions 3245–3425 (TTPSMSGAGS…VGQCYDSSPC (181 aa)) constitute a Laminin G-like 2 domain. N-linked (GlcNAc...) asparagine glycosylation is present at asparagine 3385. 7 disulfide bridges follow: cysteine 3393–cysteine 3419, cysteine 3425–cysteine 3436, cysteine 3430–cysteine 3446, cysteine 3448–cysteine 3457, cysteine 3464–cysteine 3476, cysteine 3470–cysteine 3481, and cysteine 3483–cysteine 3492. An O-linked (Xyl...) (chondroitin sulfate) serine glycan is attached at serine 3510. The Laminin G-like 3 domain maps to 3518–3705 (QYGAYFYDNG…AQAGANTRPC (188 aa)). Ca(2+) contacts are provided by aspartate 3574 and leucine 3591. Positions 3615-3617 (LRE) are mediates motor neuron attachment. Alanine 3641 and asparagine 3643 together coordinate Ca(2+). Cysteine 3671 and cysteine 3705 are oxidised to a cystine. The tract at residues 3680 to 3707 (ARPGAPPPQPLDLQHRAQAGANTRPCPS) is disordered.

In terms of assembly, has a strong tendency to aggregate in dimers or stellate structures. Interacts with other basement membrane components such as laminin, prolargin and collagen type IV. Interacts with COL13A1. Interacts with FGFBP1. Interacts with VWA1. Interacts (via C-terminus) with ECM1 (via C-terminus). Interacts with SVEP1. In terms of processing, proteolytic processing produces the C-terminal angiogenic peptide, endorepellin. This peptide can be further processed to produce the LG3 peptide. O-glycosylated. Contains three heparan sulfate chains. Also contains chondroitin sulfate.

It localises to the secreted. The protein localises to the extracellular space. Its subcellular location is the extracellular matrix. The protein resides in the basement membrane. Integral component of basement membranes. Component of the glomerular basement membrane (GBM), responsible for the fixed negative electrostatic membrane charge, and which provides a barrier which is both size- and charge-selective. It serves as an attachment substrate for cells. Plays essential roles in vascularization. Critical for normal heart development and for regulating the vascular response to injury. Also required for avascular cartilage development. Its function is as follows. Anti-angiogenic and anti-tumor peptide that inhibits endothelial cell migration, collagen-induced endothelial tube morphogenesis and blood vessel growth in the chorioallantoic membrane. Blocks endothelial cell adhesion to fibronectin and type I collagen. Anti-tumor agent in neovascularization. Interaction with its ligand, integrin alpha2/beta1, is required for the anti-angiogenic properties. Evokes a reduction in phosphorylation of receptor tyrosine kinases via alpha2/beta1 integrin-mediated activation of the tyrosine phosphatase, PTPN6. Functionally, has anti-angiogenic properties that require binding of calcium ions for full activity. The chain is Basement membrane-specific heparan sulfate proteoglycan core protein (Hspg2) from Mus musculus (Mouse).